Here is a 340-residue protein sequence, read N- to C-terminus: Hydroxyurea phosphotransferase (340 aa).

Asp-240 acts as the Proton acceptor in catalysis.

The protein belongs to the aminoglycoside phosphotransferase family.

Its function is as follows. Potential phosphotransferase that inactivates hydroxyurea by phosphorylation of the hydroxy group in the hydroxylamine moiety. This Kitasatospora aureofaciens (Streptomyces aureofaciens) protein is Hydroxyurea phosphotransferase (hur).